Here is a 122-residue protein sequence, read N- to C-terminus: MDWDLITERNIQLFIQLAGLAERPLATNMFWRQGQYETYLNYHNGRIHLCQILKQTFLDEELLFKALANWKPAAFQGIPQRLFLLRDGLAMSCSPPLSSSAELWLRLHHRQIKFLESQCVHG.

The protein is Secretion system apparatus protein SsaM (ssaM) of Salmonella typhimurium (strain LT2 / SGSC1412 / ATCC 700720).